We begin with the raw amino-acid sequence, 407 residues long: uncharacterized protein (407 aa).

Lysine 22 participates in a covalent cross-link: Glycyl lysine isopeptide (Lys-Gly) (interchain with G-Cter in ubiquitin).

It belongs to the SVF1 family.

The protein localises to the cytoplasm. This is an uncharacterized protein from Saccharomyces cerevisiae (strain ATCC 204508 / S288c) (Baker's yeast).